Consider the following 486-residue polypeptide: MATFKDACYQYKKLNKLNNAVLKLGANDVWRPSTLTKCKGWCLDCCQYTDLTYCQGCLIYHVCEWCSQYSRCFLDDNPHLLRMRTFRNEITKDDLENLINMYNTLFPINQKIVHKFANIIKQHKCRNEYLTQRYNHFLMPITLQSLSIELDGDIYYIFGYYDDMHKINQTPFSFTNLISKYDILLLDSINFDRMAFLPLTLQQEYALRYFSKSRFITEKRKCIKISHFSDNILDNLHDPNFTLQVIRNCSNMSVEWNEACNLIRNINDYFDILKSSRTEFYDISPRCRMFTQYKLKIASKLIKPNYVASNHNSLATEVHNCKWCSINNNSIVWDDFRIKNVYNDIFNFIRALVKSNLYVGHCSSEEKIYESVKDVLNVCKENEWNILVTEMFNQLEPIKLNDNNYILLNYEINWNVMNVLINSIGKVPKILTLSDVILILRIIIYDWFDIRFMRNTPMTTFTVNKLKQLYEKDRPAEHDSGVSDVE.

Positions 1–81 are RNA-binding; that stretch reads MATFKDACYQ…CFLDDNPHLL (81 aa). The segment at 42–79 is zinc-binding domain; the sequence is CLDCCQYTDLTYCQGCLIYHVCEWCSQYSRCFLDDNPH. Residues 82–176 are important for cytoskeleton localization; it reads RMRTFRNEIT…INQTPFSFTN (95 aa). Residues 317 to 486 are interaction with host IRF3; it reads EVHNCKWCSI…EHDSGVSDVE (170 aa). Positions 479–483 match the IKBKB-like degron (ILD) motif motif; sequence DSGVS. Residues 480–483 carry the pLxIS motif motif; the sequence is SGVS.

This sequence belongs to the rotavirus NSP1 family. As to quaternary structure, interacts (via C-terminus) with host IRF3; this interaction leads to IRF3 degradation. Interacts with host IRF7; this interaction leads to IRF7 degradation. Interacts with host CUL1 and CUL3. Interacts with host BTRC. The C-terminal region is phosphorylated by host CKII/CSNK2A1. Phosphorylation of the DSGXS motif is essential for host NF-kappa-B inhibition.

The protein localises to the host cytoplasm. The protein resides in the host cytoskeleton. Its function is as follows. Plays a role in the inhibition of host innate immunity by inducing the degradation of key host factors required to activate interferon production such as IRF3, IRF5 or IRF7. Associates with components of cullin RING ligases (CRLs) including CUL1 or CUL3, which are essential multisubunit ubiquitination complexes, to modulate their activities. Recognizes the host NF-kappa-B regulator BTRC through the presence of a DSGXS motif in the C-terminal substrate recognition domain. This is Non-structural protein 1 from Rotavirus A (strain RVA/Human/Philippines/L26/1987/G12P1B[4]) (RV-A).